The following is a 516-amino-acid chain: Golgin-84 (516 aa).

Residues 1–492 (MSSWITGLAD…TFLRRYPMMR (492 aa)) lie on the Cytoplasmic side of the membrane. The tract at residues 28–80 (QTENATGSADPMRRSMTSSTQSLSTSLKSTLSPVRRSGANSSSSVKSDGGVSV) is disordered. Over residues 42 to 80 (SMTSSTQSLSTSLKSTLSPVRRSGANSSSSVKSDGGVSV) the composition is skewed to low complexity. S64 and S74 each carry phosphoserine. A coiled-coil region spans residues 108 to 423 (TNELAAFKIA…KAQTQLQQNM (316 aa)). Residues 493–513 (VSVIVYVALLHLWVMFVLLST) traverse the membrane as a helical; Anchor for type IV membrane protein segment. The Lumenal segment spans residues 514-516 (TPN).

It is found in the golgi apparatus membrane. Its function is as follows. May be involved in maintaining Golgi structure and in intra-Golgi transport. The chain is Golgin-84 (Golgin84) from Drosophila melanogaster (Fruit fly).